The following is a 256-amino-acid chain: uncharacterized protein (256 aa).

Residues 16-83 (VRLQKILSRA…DSLVYLALNK (68 aa)) enclose the S4 RNA-binding domain. Residue Asp121 is the Nucleophile of the active site.

The protein belongs to the pseudouridine synthase RsuA family.

The enzyme catalyses a uridine in RNA = a pseudouridine in RNA. This is an uncharacterized protein from Mycobacterium leprae (strain TN).